Consider the following 343-residue polypeptide: Undecaprenyl-diphosphatase 2 (343 aa).

4 helical membrane passes run 21 to 41 (LFPV…GGSW), 57 to 77 (PYLT…LVFF), 104 to 124 (LAWL…ALEH), and 129 to 149 (LFAK…ILLA). Residues 179–193 (VPAPATVPTQTTSAP) show a composition bias toward low complexity. Residues 179–202 (VPAPATVPTQTTSAPGGRATARHT) are disordered. Transmembrane regions (helical) follow at residues 225 to 245 (AGVI…RSGI), 265 to 285 (FLLA…ALAG), 294 to 314 (QVIL…RFLV), and 322 to 342 (LTPF…RFAI).

Belongs to the UppP family.

Its subcellular location is the cell membrane. The catalysed reaction is di-trans,octa-cis-undecaprenyl diphosphate + H2O = di-trans,octa-cis-undecaprenyl phosphate + phosphate + H(+). In terms of biological role, catalyzes the dephosphorylation of undecaprenyl diphosphate (UPP). Confers resistance to bacitracin. The sequence is that of Undecaprenyl-diphosphatase 2 from Frankia alni (strain DSM 45986 / CECT 9034 / ACN14a).